Consider the following 154-residue polypeptide: CASP-like protein 5B3 (154 aa).

The Cytoplasmic segment spans residues 1 to 17 (MKDVVGSPGTWSGMSLR). Residues 18 to 38 (VSQCVFAGASVVAMASAYGFS) form a helical membrane-spanning segment. A glycan (N-linked (GlcNAc...) asparagine) is linked at Asn-39. Residues 39 to 42 (NYTA) lie on the Extracellular side of the membrane. The chain crosses the membrane as a helical span at residues 43–63 (FCYLIASMGLQLLWSFGLACL). Residues 64 to 77 (DIYSLQTKRDLHNP) are Cytoplasmic-facing. Residues 78–98 (VLVSLFVVGDWVTAILSFAAA) form a helical membrane-spanning segment. Over 99–129 (SASAGVTILFERDVHFCRMYPQLSCGRYELS) the chain is Extracellular. The chain crosses the membrane as a helical span at residues 130–150 (VILAFITWSFIATSAVSMFWL). Residues 151–154 (LASL) lie on the Cytoplasmic side of the membrane.

The protein belongs to the Casparian strip membrane proteins (CASP) family. As to quaternary structure, homodimer and heterodimers.

It is found in the cell membrane. The protein is CASP-like protein 5B3 of Oryza sativa subsp. indica (Rice).